The primary structure comprises 258 residues: Synapse differentiation-inducing gene protein 1 (258 aa).

The Cytoplasmic portion of the chain corresponds to 1–181; it reads MDGIIEQKSM…NFLMMPPRDH (181 aa). Serine 137 carries the post-translational modification Phosphoserine. A helical membrane pass occupies residues 182–202; it reads LGLSVFSMLCCFWPLGIAAFY. Topologically, residues 203-228 are extracellular; it reads LSHETNKAVAKGDLHQASTSSRRALF. The helical intramembrane region spans 229–249; that stretch reads LAVLSITIGTGVYVGVAVALI. The Extracellular segment spans residues 250–258; that stretch reads AYLSKNNHL.

Belongs to the CD225/Dispanin family. In terms of assembly, homodimer. Interacts with GRIA1 and GRIA2.

The protein localises to the cell membrane. The protein resides in the early endosome membrane. It is found in the postsynaptic density membrane. Its subcellular location is the synapse. It localises to the cell projection. The protein localises to the dendrite. The protein resides in the dendritic spine. Its function is as follows. May regulate AMPA receptor content at nascent synapses, and have a role in postsynaptic development and maturation. The chain is Synapse differentiation-inducing gene protein 1 (SYNDIG1) from Macaca fascicularis (Crab-eating macaque).